The chain runs to 208 residues: Large ribosomal subunit protein uL3 (208 aa).

Positions 116–148 (GFQGVIKRHGQSRGPMAHGSRYHRRPGSMGPVA) are disordered.

The protein belongs to the universal ribosomal protein uL3 family. As to quaternary structure, part of the 50S ribosomal subunit. Forms a cluster with proteins L14 and L19.

In terms of biological role, one of the primary rRNA binding proteins, it binds directly near the 3'-end of the 23S rRNA, where it nucleates assembly of the 50S subunit. In Streptococcus pyogenes serotype M5 (strain Manfredo), this protein is Large ribosomal subunit protein uL3.